A 161-amino-acid polypeptide reads, in one-letter code: N5-carboxyaminoimidazole ribonucleotide mutase (161 aa).

Ser-9, Asp-12, and Arg-39 together coordinate substrate.

Belongs to the AIR carboxylase family. Class I subfamily.

It catalyses the reaction 5-carboxyamino-1-(5-phospho-D-ribosyl)imidazole + H(+) = 5-amino-1-(5-phospho-D-ribosyl)imidazole-4-carboxylate. It functions in the pathway purine metabolism; IMP biosynthesis via de novo pathway; 5-amino-1-(5-phospho-D-ribosyl)imidazole-4-carboxylate from 5-amino-1-(5-phospho-D-ribosyl)imidazole (N5-CAIR route): step 2/2. Catalyzes the conversion of N5-carboxyaminoimidazole ribonucleotide (N5-CAIR) to 4-carboxy-5-aminoimidazole ribonucleotide (CAIR). The polypeptide is N5-carboxyaminoimidazole ribonucleotide mutase (Vibrio cholerae serotype O1 (strain ATCC 39315 / El Tor Inaba N16961)).